A 195-amino-acid polypeptide reads, in one-letter code: NADH-quinone oxidoreductase subunit B (195 aa).

Residues C74, C75, C139, and C169 each coordinate [4Fe-4S] cluster.

This sequence belongs to the complex I 20 kDa subunit family. NDH-1 is composed of 14 different subunits. Subunits NuoB, C, D, E, F, and G constitute the peripheral sector of the complex. The cofactor is [4Fe-4S] cluster.

It localises to the cell inner membrane. The catalysed reaction is a quinone + NADH + 5 H(+)(in) = a quinol + NAD(+) + 4 H(+)(out). In terms of biological role, NDH-1 shuttles electrons from NADH, via FMN and iron-sulfur (Fe-S) centers, to quinones in the respiratory chain. The immediate electron acceptor for the enzyme in this species is believed to be ubiquinone. Couples the redox reaction to proton translocation (for every two electrons transferred, four hydrogen ions are translocated across the cytoplasmic membrane), and thus conserves the redox energy in a proton gradient. This is NADH-quinone oxidoreductase subunit B from Methylobacterium radiotolerans (strain ATCC 27329 / DSM 1819 / JCM 2831 / NBRC 15690 / NCIMB 10815 / 0-1).